A 228-amino-acid polypeptide reads, in one-letter code: Probable endo-1,4-beta-xylanase A (228 aa).

An N-terminal signal peptide occupies residues 1-18 (MVSFSYLLLACSAIGALA). N29 carries N-linked (GlcNAc...) asparagine glycosylation. The GH11 domain occupies 40-228 (AGTPSSTGWN…SSGSASITVY (189 aa)). E124 acts as the Nucleophile in catalysis. Catalysis depends on E215, which acts as the Proton donor.

It belongs to the glycosyl hydrolase 11 (cellulase G) family.

It is found in the secreted. The enzyme catalyses Endohydrolysis of (1-&gt;4)-beta-D-xylosidic linkages in xylans.. It participates in glycan degradation; xylan degradation. Endo-1,4-beta-xylanase involved in the hydrolysis of xylan, a major structural heterogeneous polysaccharide found in plant biomass representing the second most abundant polysaccharide in the biosphere, after cellulose. In Aspergillus fumigatus (strain CBS 144.89 / FGSC A1163 / CEA10) (Neosartorya fumigata), this protein is Probable endo-1,4-beta-xylanase A (xlnA).